The chain runs to 473 residues: Spliceosome-associated protein CWC27 homolog (473 aa).

Ser-2 is subject to N-acetylserine. Positions 11 to 166 constitute a PPIase cyclophilin-type domain; sequence TNGKVLLKTT…NPHKIKSCEV (156 aa). The span at 177-193 shows a compositional bias: basic and acidic residues; that stretch reads REIKRPKKEKPEEEVKK. Disordered stretches follow at residues 177–386 and 399–473; these read REIK…EDQT and QAIA…KERR. The stretch at 206–230 forms a coiled coil; it reads SFGEEAEEEEEEVNRVSQSMKGKSK. Residues 231–241 show a composition bias toward basic and acidic residues; it reads SSHDLLKDDPH. The span at 257–266 shows a compositional bias: acidic residues; the sequence is GDLDDGGEGE. Composition is skewed to basic and acidic residues over residues 267–287, 305–348, and 360–372; these read SAEH…ERIA, EVEK…KRSE, and EYRR…EALR. Positions 305 to 378 form a coiled coil; that stretch reads EVEKKSVNRS…EALRKQQSKK (74 aa). The residue at position 347 (Ser-347) is a Phosphoserine. The segment covering 405–419 has biased composition (acidic residues); sequence PENDIPETEVEDDEG. Composition is skewed to basic and acidic residues over residues 426 to 438 and 458 to 473; these read QFED…KDAS and RREE…KERR.

This sequence belongs to the cyclophilin-type PPIase family. Part of the activated spliceosome B/catalytic step 1 spliceosome, one of the forms of the spliceosome which has a well-formed active site but still cannot catalyze the branching reaction and is composed at least of 52 proteins, the U2, U5 and U6 snRNAs and the pre-mRNA. Recruited during early steps of activated spliceosome B maturation, it is probably one of the first proteins released from this complex as he matures to the spliceosome C complex. Component of the minor spliceosome, which splices U12-type introns.

The protein localises to the nucleus. Functionally, as part of the spliceosome, plays a role in pre-mRNA splicing. Probable inactive PPIase with no peptidyl-prolyl cis-trans isomerase activity. As a component of the minor spliceosome, involved in the splicing of U12-type introns in pre-mRNAs. This is Spliceosome-associated protein CWC27 homolog from Pongo abelii (Sumatran orangutan).